The chain runs to 249 residues: MKLLLILGSVIALPTFAAGGGDLDASDYTGVSFWLVTAALLASTVFFFVERDRVSAKWKTSLTVSGLVTGIAFWHYMYMRGVWIETGDSPTVFRYIDWLLTVPLLICEFYLILAAATNVAGSLFKKLLVGSLVMLVFGYMGEAGIMAAWPAFIIGCLAWVYMIYELWAGEGKSACNTASPAVQSAYNTMMYIIIFGWAIYPVGYFTGYLMGDGGSALNLNLIYNLADFVNKILFGLIIWNVAVKESSNA.

The N-terminal stretch at 1-17 is a signal peptide; the sequence is MKLLLILGSVIALPTFA. The next 7 membrane-spanning stretches (helical) occupy residues 30–49, 62–84, 99–121, 128–147, 151–168, 189–211, and 221–243; these read GVSF…FFFV, LTVS…GVWI, LLTV…NVAG, LVGS…GIMA, AFII…ELWA, MMYI…YLMG, and LIYN…NVAV. Position 231 is an N6-(retinylidene)lysine (Lys-231).

The protein belongs to the archaeal/bacterial/fungal opsin family. Contains one covalently linked retinal chromophore.

The protein localises to the cell membrane. Its function is as follows. Light-driven proton pump that generates photothrophic energy. The polypeptide is Green-light absorbing proteorhodopsin (Gamma-proteobacterium EBAC31A08).